The chain runs to 325 residues: Pyruvate dehydrogenase E1 component subunit beta (325 aa).

A thiamine diphosphate-binding site is contributed by Glu60.

In terms of assembly, heterodimer of an alpha and a beta chain. Requires thiamine diphosphate as cofactor.

Its subcellular location is the cytoplasm. The protein resides in the secreted. It carries out the reaction N(6)-[(R)-lipoyl]-L-lysyl-[protein] + pyruvate + H(+) = N(6)-[(R)-S(8)-acetyldihydrolipoyl]-L-lysyl-[protein] + CO2. With respect to regulation, activity of the E1 module is inhibited by the pyruvate dehydrogenase inhibitor PdhI. Functionally, the pyruvate dehydrogenase complex catalyzes the overall conversion of pyruvate to acetyl-CoA and CO(2). It contains multiple copies of three enzymatic components: pyruvate dehydrogenase (E1), dihydrolipoamide acetyltransferase (E2) and lipoamide dehydrogenase (E3). The B.subtilis PDH complex also possesses branched-chain 2-oxoacid dehydrogenase (BCDH) activity. The sequence is that of Pyruvate dehydrogenase E1 component subunit beta from Bacillus subtilis (strain 168).